Consider the following 179-residue polypeptide: Large ribosomal subunit protein uL5 (179 aa).

It belongs to the universal ribosomal protein uL5 family. In terms of assembly, part of the 50S ribosomal subunit; part of the 5S rRNA/L5/L18/L25 subcomplex. Contacts the 5S rRNA and the P site tRNA. Forms a bridge to the 30S subunit in the 70S ribosome.

In terms of biological role, this is one of the proteins that bind and probably mediate the attachment of the 5S RNA into the large ribosomal subunit, where it forms part of the central protuberance. In the 70S ribosome it contacts protein S13 of the 30S subunit (bridge B1b), connecting the 2 subunits; this bridge is implicated in subunit movement. Contacts the P site tRNA; the 5S rRNA and some of its associated proteins might help stabilize positioning of ribosome-bound tRNAs. This chain is Large ribosomal subunit protein uL5, found in Bacillus cereus (strain Q1).